We begin with the raw amino-acid sequence, 490 residues long: MDGLEDGPLDASTATSQKPQRQVRLKLTSRHEDIALPESTGPILVPTGLRRYALSTLVNNLLESEKPIPFEFLINGTYLRTSIDEYLTANGISAETTLDVEYVRALVPPLHVASFLHDDWVSAVDVLSDTSIAGSKSRVNAGQERILSASYDGLLRMWNMSSETIALSPAAREGGHTASVKCARMVSPSQIISSGLDRTVRLWKYTESEDGFSASITPQLELYGHKGSVDSISMHAQSHRILSASADHSVGFWSTRKSENPAAPESLLPSNTSRSSKRRKLNSSVSVPQRGPLALFKSHTAPVSAAIFDAKDPTVGYSTSWDHSLRTWDLVTGTLVDTRTASHSLLSVSHMPELSLLASGTSARHITLIDPRASATTVSALTLRGHTNAVVCLARDPDSTYGLISGSHDGTCRIWDVRSTRTDKDGVMGESIYSIPRKSVGGAGKRVGGEGVKVFDVCWDKSVGIVSSGEDKMIQINRGEGVLPNGGSDR.

Positions 1–22 are disordered; that stretch reads MDGLEDGPLDASTATSQKPQRQ. A ubiquitin-like (UBL) domain region spans residues 23-104; the sequence is VRLKLTSRHE…ETTLDVEYVR (82 aa). WD repeat units lie at residues 116–168, 175–213, 224–263, 298–338, 340–379, 385–425, and 449–487; these read LHDD…IALS, GHTA…DGFS, GHKG…NPAA, SHTA…LVDT, TASH…TTVS, GHTN…TDKD, and GEGV…PNGG. The disordered stretch occupies residues 255 to 286; the sequence is TRKSENPAAPESLLPSNTSRSSKRRKLNSSVS.

Belongs to the WD repeat WDR12/YTM1 family. Component of the NOP7 complex, composed of ERB1, NOP7 and YTM1. The complex is held together by ERB1, which interacts with NOP7 via its N-terminal domain and with YTM1 via a high-affinity interaction between the seven-bladed beta-propeller domains of the 2 proteins. The NOP7 complex associates with the 66S pre-ribosome. Interacts (via UBL domain) with MDN1 (via VWFA/MIDAS domain).

The protein localises to the nucleus. It localises to the nucleolus. It is found in the nucleoplasm. In terms of biological role, component of the NOP7 complex, which is required for maturation of the 25S and 5.8S ribosomal RNAs and formation of the 60S ribosome. The polypeptide is Ribosome biogenesis protein YTM1 (Ajellomyces capsulatus (strain NAm1 / WU24) (Darling's disease fungus)).